The sequence spans 180 residues: Small ribosomal subunit protein uS5 (180 aa).

Residues 24–87 (MIEKLVAVNR…EQARKNLATV (64 aa)) form the S5 DRBM domain.

This sequence belongs to the universal ribosomal protein uS5 family. As to quaternary structure, part of the 30S ribosomal subunit. Contacts proteins S4 and S8.

Its function is as follows. With S4 and S12 plays an important role in translational accuracy. Functionally, located at the back of the 30S subunit body where it stabilizes the conformation of the head with respect to the body. The chain is Small ribosomal subunit protein uS5 from Xanthomonas axonopodis pv. citri (strain 306).